Consider the following 231-residue polypeptide: ATP-dependent dethiobiotin synthetase BioD (231 aa).

12-17 (EVGKTV) lines the ATP pocket. Residue threonine 16 participates in Mg(2+) binding. The active site involves lysine 37. Position 41 (serine 41) interacts with substrate. ATP is bound by residues aspartate 51, 112-115 (EGAG), and 202-204 (PKL). Mg(2+) contacts are provided by aspartate 51 and glutamate 112.

Belongs to the dethiobiotin synthetase family. In terms of assembly, homodimer. Mg(2+) is required as a cofactor.

The protein localises to the cytoplasm. The catalysed reaction is (7R,8S)-7,8-diammoniononanoate + CO2 + ATP = (4R,5S)-dethiobiotin + ADP + phosphate + 3 H(+). It functions in the pathway cofactor biosynthesis; biotin biosynthesis; biotin from 7,8-diaminononanoate: step 1/2. Functionally, catalyzes a mechanistically unusual reaction, the ATP-dependent insertion of CO2 between the N7 and N8 nitrogen atoms of 7,8-diaminopelargonic acid (DAPA, also called 7,8-diammoniononanoate) to form a ureido ring. The chain is ATP-dependent dethiobiotin synthetase BioD from Bacillus subtilis subsp. natto.